Consider the following 290-residue polypeptide: Pyridoxal kinase PdxY (290 aa).

Residues S12 and 47 to 48 contribute to the substrate site; that span reads TQ. Residues D114, E151, K184, and 211–214 contribute to the ATP site; that span reads RPLL. D225 contacts substrate.

Belongs to the pyridoxine kinase family. PdxY subfamily. In terms of assembly, homodimer. Mg(2+) is required as a cofactor.

The catalysed reaction is pyridoxal + ATP = pyridoxal 5'-phosphate + ADP + H(+). Its pathway is cofactor metabolism; pyridoxal 5'-phosphate salvage; pyridoxal 5'-phosphate from pyridoxal: step 1/1. Its function is as follows. Pyridoxal kinase involved in the salvage pathway of pyridoxal 5'-phosphate (PLP). Catalyzes the phosphorylation of pyridoxal to PLP. The chain is Pyridoxal kinase PdxY from Pseudomonas putida (strain W619).